Consider the following 565-residue polypeptide: Sulfite reductase [NADPH] hemoprotein beta-component (565 aa).

Residues Cys-429, Cys-435, Cys-474, and Cys-478 each coordinate [4Fe-4S] cluster. Siroheme is bound at residue Cys-478.

It belongs to the nitrite and sulfite reductase 4Fe-4S domain family. As to quaternary structure, alpha(8)-beta(8). The alpha component is a flavoprotein, the beta component is a hemoprotein. It depends on siroheme as a cofactor. [4Fe-4S] cluster is required as a cofactor.

The catalysed reaction is hydrogen sulfide + 3 NADP(+) + 3 H2O = sulfite + 3 NADPH + 4 H(+). The protein operates within sulfur metabolism; hydrogen sulfide biosynthesis; hydrogen sulfide from sulfite (NADPH route): step 1/1. Its function is as follows. Component of the sulfite reductase complex that catalyzes the 6-electron reduction of sulfite to sulfide. This is one of several activities required for the biosynthesis of L-cysteine from sulfate. This is Sulfite reductase [NADPH] hemoprotein beta-component from Shewanella putrefaciens (strain CN-32 / ATCC BAA-453).